We begin with the raw amino-acid sequence, 501 residues long: Probable cytosol aminopeptidase (501 aa).

Mn(2+)-binding residues include Lys268 and Asp273. Residue Lys280 is part of the active site. Residues Asp291, Asp350, and Glu352 each contribute to the Mn(2+) site. Residue Arg354 is part of the active site.

The protein belongs to the peptidase M17 family. Mn(2+) serves as cofactor.

It is found in the cytoplasm. The catalysed reaction is Release of an N-terminal amino acid, Xaa-|-Yaa-, in which Xaa is preferably Leu, but may be other amino acids including Pro although not Arg or Lys, and Yaa may be Pro. Amino acid amides and methyl esters are also readily hydrolyzed, but rates on arylamides are exceedingly low.. The enzyme catalyses Release of an N-terminal amino acid, preferentially leucine, but not glutamic or aspartic acids.. In terms of biological role, presumably involved in the processing and regular turnover of intracellular proteins. Catalyzes the removal of unsubstituted N-terminal amino acids from various peptides. This is Probable cytosol aminopeptidase from Colwellia psychrerythraea (strain 34H / ATCC BAA-681) (Vibrio psychroerythus).